The sequence spans 234 residues: Orotidine 5'-phosphate decarboxylase (234 aa).

Residues Asp10, Lys31, 58-67 (DLKLHDIPNT), Thr121, Arg183, Gln192, Gly212, and Arg213 contribute to the substrate site. The active-site Proton donor is the Lys60.

Belongs to the OMP decarboxylase family. Type 1 subfamily. Homodimer.

The enzyme catalyses orotidine 5'-phosphate + H(+) = UMP + CO2. It participates in pyrimidine metabolism; UMP biosynthesis via de novo pathway; UMP from orotate: step 2/2. Catalyzes the decarboxylation of orotidine 5'-monophosphate (OMP) to uridine 5'-monophosphate (UMP). This Halalkalibacterium halodurans (strain ATCC BAA-125 / DSM 18197 / FERM 7344 / JCM 9153 / C-125) (Bacillus halodurans) protein is Orotidine 5'-phosphate decarboxylase.